Here is a 134-residue protein sequence, read N- to C-terminus: MWSDPIADMLTRIRNANQVFKEQVDVPASNLKKAIADILVREGFIKGYTYIEDGKQGILRIQMKYKGTRKNRERVIHGIVRVSKPGRRIYVGKNNIPRVKNGLGIAIISTSKGVLTDKEAAEHGVGGEVIAYIW.

The protein belongs to the universal ribosomal protein uS8 family. Part of the 30S ribosomal subunit. Contacts proteins S5 and S12.

Its function is as follows. One of the primary rRNA binding proteins, it binds directly to 16S rRNA central domain where it helps coordinate assembly of the platform of the 30S subunit. In Fervidobacterium nodosum (strain ATCC 35602 / DSM 5306 / Rt17-B1), this protein is Small ribosomal subunit protein uS8.